The following is a 544-amino-acid chain: Phenylalanine--tRNA ligase beta subunit (544 aa).

The 76-residue stretch at 268–343 (LIHKIQNVRE…MSIGYNNLEP (76 aa)) folds into the B5 domain. Positions 321, 327, 330, and 331 each coordinate Mg(2+).

The protein belongs to the phenylalanyl-tRNA synthetase beta subunit family. Type 2 subfamily. Tetramer of two alpha and two beta subunits. Mg(2+) serves as cofactor.

It localises to the cytoplasm. It carries out the reaction tRNA(Phe) + L-phenylalanine + ATP = L-phenylalanyl-tRNA(Phe) + AMP + diphosphate + H(+). The chain is Phenylalanine--tRNA ligase beta subunit from Saccharolobus solfataricus (strain ATCC 35092 / DSM 1617 / JCM 11322 / P2) (Sulfolobus solfataricus).